The sequence spans 695 residues: tRNA wybutosine-synthesizing protein 4 (695 aa).

S-adenosyl-L-methionine-binding positions include lysine 38, arginine 88, glycine 115, aspartate 146–tyrosine 147, aspartate 196–leucine 197, and glutamate 224. The active-site Proton donor; for both methylation and methoxycarbonylation activities is arginine 88. Catalysis depends on tyrosine 229, which acts as the Proton acceptor; for methoxycarbonylation activity.

The protein belongs to the methyltransferase superfamily. LCMT family.

It is found in the cytoplasm. The protein localises to the mitochondrion. The enzyme catalyses 7-[(3S)-3-amino-3-carboxypropyl]wyosine(37) in tRNA(Phe) + S-adenosyl-L-methionine = 7-[(3S)-(3-amino-3-methoxycarbonyl)propyl]wyosine(37) in tRNA(Phe) + S-adenosyl-L-homocysteine. The catalysed reaction is 7-[(3S)-(3-amino-3-methoxycarbonyl)propyl]wyosine(37) in tRNA(Phe) + S-adenosyl-L-methionine + CO2 = wybutosine(37) in tRNA(Phe) + S-adenosyl-L-homocysteine + 2 H(+). It functions in the pathway tRNA modification; wybutosine-tRNA(Phe) biosynthesis. In terms of biological role, S-adenosyl-L-methionine-dependent methyltransferase that acts as a component of the wybutosine biosynthesis pathway. Wybutosine is a hyper modified guanosine with a tricyclic base found at the 3'-position adjacent to the anticodon of eukaryotic phenylalanine tRNA. Catalyzes the final 2 independent reactions, methylation of the alpha-carboxy group of wybutosine-72 to form wybutosine-58, and methoxycarbonylation of alpha-amino group of wybutosine-58 through the fixation of CO(2) to complete wybutosine. This chain is tRNA wybutosine-synthesizing protein 4 (PPM2), found in Saccharomyces cerevisiae (strain ATCC 204508 / S288c) (Baker's yeast).